A 477-amino-acid polypeptide reads, in one-letter code: 3-isopropylmalate dehydratase large subunit (477 aa).

Residues Cys352, Cys413, and Cys416 each contribute to the [4Fe-4S] cluster site.

The protein belongs to the aconitase/IPM isomerase family. LeuC type 1 subfamily. Heterodimer of LeuC and LeuD. [4Fe-4S] cluster is required as a cofactor.

The enzyme catalyses (2R,3S)-3-isopropylmalate = (2S)-2-isopropylmalate. The protein operates within amino-acid biosynthesis; L-leucine biosynthesis; L-leucine from 3-methyl-2-oxobutanoate: step 2/4. In terms of biological role, catalyzes the isomerization between 2-isopropylmalate and 3-isopropylmalate, via the formation of 2-isopropylmaleate. In Pseudomonas putida (strain W619), this protein is 3-isopropylmalate dehydratase large subunit.